The chain runs to 241 residues: NADPH-dependent FMN reductase ArsH (241 aa).

Residue 43 to 50 (SLRTVSYS) participates in FMN binding.

This sequence belongs to the ArsH family. As to quaternary structure, homotetramer. The cofactor is FMN.

Its function is as follows. Has NADPH-dependent FMN reductase activity. No activity with NADH. May play a role in resistance to heavy metal toxicity. This is NADPH-dependent FMN reductase ArsH from Rhizobium meliloti (strain 1021) (Ensifer meliloti).